We begin with the raw amino-acid sequence, 309 residues long: Ribonuclease Z (309 aa).

The Zn(2+) site is built by His64, His66, Asp68, His69, His141, Asp209, and His267. Catalysis depends on Asp68, which acts as the Proton acceptor.

This sequence belongs to the RNase Z family. In terms of assembly, homodimer. Zn(2+) serves as cofactor.

The catalysed reaction is Endonucleolytic cleavage of RNA, removing extra 3' nucleotides from tRNA precursor, generating 3' termini of tRNAs. A 3'-hydroxy group is left at the tRNA terminus and a 5'-phosphoryl group is left at the trailer molecule.. Functionally, zinc phosphodiesterase, which displays some tRNA 3'-processing endonuclease activity. Probably involved in tRNA maturation, by removing a 3'-trailer from precursor tRNA. This is Ribonuclease Z from Picrophilus torridus (strain ATCC 700027 / DSM 9790 / JCM 10055 / NBRC 100828 / KAW 2/3).